Consider the following 645-residue polypeptide: MSLKLPRNWDFNLKVEAAKIARSRSVMTGEQMAAFHPSSTPNPLERPIKMGWLKKQRSIVKNWQQRYFVLRAQQLYYYKDEEDTKPQGCMYLPGCTIKEIATNPEEAGKFVFEIIPASWDQNRMGQDSYVLMASSQAEMEEWVKFLRRVAGTPCGVFGQRLDETVAYEQKFGPHLVPILVEKCAEFILEHGRNEEGIFRLPGQDNLVKQLRDAFDAGERPSFDRDTDVHTVASLLKLYLRDLPEPVVPWSQYEGFLLCGQLTNADEAKAQQELMKQLSILPRDNYSLLSYICRFLHEIQLNCAVNKMSVDNLATVIGVNLIRSKVEDPAVIMRGTPQIQRVMTMMIRDHEVLFPKSKDIPLSPPAQKNDPKKAPVARSSVGWDATEDLRISRTDSFSSMTSDSDTTSPTGQQPSDAFPEDSSKVPREKPGDWKMQSRKRTQTLPNRKCFLTSAFQGANSSKMEIFKNEFWSPSSEAKAGEGHRRTMSQDLRQLSDSQRTSTYDNVPSLPGSPGEEASALSSQACDSKGDTLASPNSETGPGKKNSGEEEIDSLQRMVQELRKEIETQKQMYEEQIKNLEKENYDVWAKVVRLNEELEKEKKKSAALEISLRNMERSREDVEKRNKALEEEVKEFVKSMKEPKTEA.

The PH domain maps to R46–G151. In terms of domain architecture, Rho-GAP spans Q159–F353. Disordered regions lie at residues K355 to P444 and F469 to I550. S362 and S395 each carry phosphoserine. Residues T393–T409 are compositionally biased toward low complexity. Position 406 is a phosphothreonine (T406). The span at D420–D431 shows a compositional bias: basic and acidic residues. Positions S487–N504 are enriched in polar residues. Residue S536 is modified to Phosphoserine. Residues G541 to E644 are a coiled coil.

Its function is as follows. GTPase activator for the Rho-type GTPases by converting them to an inactive GDP-bound state. This Homo sapiens (Human) protein is Rho GTPase-activating protein 25 (ARHGAP25).